We begin with the raw amino-acid sequence, 199 residues long: MQLKRVAEAKLPTPWGDFLMIGFEEIATKHDHLALVYGDITSKEPVLARVHSECLTGDALFSLRCDCGFQLAAALSSIAEERRGLLLYHRQEGRNIGLLNKIRAYALQDQGSDTVKANHQLGFAADERDFTLCADMFKVLGVYSIRLLTNNPQKVDILTQAGINVAERIPLIVGRNPENARYLDTKAAKMGHLLHDRYK.

49–53 (RVHSE) provides a ligand contact to GTP. Positions 54, 65, and 67 each coordinate Zn(2+). GTP contacts are provided by residues Gln70, 92–94 (EGR), and Thr114. Asp126 acts as the Proton acceptor in catalysis. Residue Arg128 is the Nucleophile of the active site. Residues Thr149 and Lys154 each coordinate GTP.

It belongs to the GTP cyclohydrolase II family. It depends on Zn(2+) as a cofactor.

The enzyme catalyses GTP + 4 H2O = 2,5-diamino-6-hydroxy-4-(5-phosphoribosylamino)-pyrimidine + formate + 2 phosphate + 3 H(+). Its pathway is cofactor biosynthesis; riboflavin biosynthesis; 5-amino-6-(D-ribitylamino)uracil from GTP: step 1/4. Catalyzes the conversion of GTP to 2,5-diamino-6-ribosylamino-4(3H)-pyrimidinone 5'-phosphate (DARP), formate and pyrophosphate. The sequence is that of GTP cyclohydrolase-2 from Baumannia cicadellinicola subsp. Homalodisca coagulata.